We begin with the raw amino-acid sequence, 85 residues long: Phycobilisome 9.7 kDa linker polypeptide, phycocyanin-associated, rod (85 aa).

Residues 16–74 form the CpcD-like domain; that stretch reads NRVFVYEVEGLRQNEQTDNNRYQIRNSSTIEIQVPYSRMNEEDRRITRLGGRIVNIRPA.

It belongs to the phycobilisome linker protein family.

It is found in the cellular thylakoid membrane. Rod linker protein, associated with phycocyanin. Linker polypeptides determine the state of aggregation and the location of the disk-shaped phycobiliprotein units within the phycobilisome and modulate their spectroscopic properties in order to mediate a directed and optimal energy transfer. The polypeptide is Phycobilisome 9.7 kDa linker polypeptide, phycocyanin-associated, rod (cpcD2) (Microchaete diplosiphon (Fremyella diplosiphon)).